Reading from the N-terminus, the 160-residue chain is MGVTKKPDLNDPVLRAKLAKGMGHNYYGEPAWPNDLLYIFPVVILGTIACNVGLAVLEPSMIGEPADPFATPLEILPEWYFFPVFQILRTVPNKLLGVLLMASVPAGLLTVPFLENVNKFQNPFRRPVATTVFLVGTVVALWLGIGATLPIDKSLTLGLF.

3 helical membrane-spanning segments follow: residues 36-56 (LLYI…GLAV), 95-115 (LLGV…PFLE), and 131-151 (TVFL…TLPI).

Belongs to the cytochrome b family. PetD subfamily. The 4 large subunits of the cytochrome b6-f complex are cytochrome b6, subunit IV (17 kDa polypeptide, petD), cytochrome f and the Rieske protein, while the 4 small subunits are petG, petL, petM and petN. The complex functions as a dimer.

It localises to the plastid. Its subcellular location is the chloroplast thylakoid membrane. Functionally, component of the cytochrome b6-f complex, which mediates electron transfer between photosystem II (PSII) and photosystem I (PSI), cyclic electron flow around PSI, and state transitions. This chain is Cytochrome b6-f complex subunit 4, found in Spinacia oleracea (Spinach).